We begin with the raw amino-acid sequence, 290 residues long: Endoplasmic reticulum-Golgi intermediate compartment protein 1 (290 aa).

Over 1 to 27 (MSFDVRRFDIYRKVPKDLTQPTYTGAF) the chain is Cytoplasmic. The chain crosses the membrane as a helical span at residues 28 to 48 (ISICCCVFMLFLFLSELTGFI). The Lumenal segment spans residues 49–254 (ATEIVNELYV…RRRPFYRFIT (206 aa)). The N-linked (GlcNAc...) asparagine glycan is linked to Asn-74. Residues 255–275 (TICAIIGGTFTVAGIIDSCIF) form a helical membrane-spanning segment. Topologically, residues 276 to 290 (TASEAWKKIQIGKMS) are cytoplasmic.

This sequence belongs to the ERGIC family.

It is found in the endoplasmic reticulum membrane. Its subcellular location is the endoplasmic reticulum-Golgi intermediate compartment membrane. It localises to the golgi apparatus membrane. Functionally, possible role in transport between endoplasmic reticulum and Golgi. This is Endoplasmic reticulum-Golgi intermediate compartment protein 1 (ergic1) from Danio rerio (Zebrafish).